We begin with the raw amino-acid sequence, 211 residues long: Uracil phosphoribosyltransferase (211 aa).

5-phospho-alpha-D-ribose 1-diphosphate-binding positions include Arg-78, Arg-103, and 130-138; that span reads DPMLATGGT. Uracil is bound by residues Ile-195 and 200 to 202; that span reads GDA. Residue Asp-201 participates in 5-phospho-alpha-D-ribose 1-diphosphate binding.

Belongs to the UPRTase family. It depends on Mg(2+) as a cofactor.

It catalyses the reaction UMP + diphosphate = 5-phospho-alpha-D-ribose 1-diphosphate + uracil. The protein operates within pyrimidine metabolism; UMP biosynthesis via salvage pathway; UMP from uracil: step 1/1. With respect to regulation, allosterically activated by GTP. Its function is as follows. Catalyzes the conversion of uracil and 5-phospho-alpha-D-ribose 1-diphosphate (PRPP) to UMP and diphosphate. This Paenarthrobacter aurescens (strain TC1) protein is Uracil phosphoribosyltransferase.